A 305-amino-acid polypeptide reads, in one-letter code: Nuclear egress protein 1 (305 aa).

Positions 1 to 42 are disordered; the sequence is MYDIAPRRSGSRPGPGRDKTRRRSRFSAAGNPGVERRASRKS. The segment at 105–224 adopts a CCCH-type zinc-finger fold; that stretch reads CLTLSGMGYY…YVIFPGTSAH (120 aa).

This sequence belongs to the herpesviridae NEC1 protein family. As to quaternary structure, forms a heterohexameric complex with NEC2. Interacts with capsid vertex specific component 2/CVC2; this interaction directs the capsid to the host inner nuclear membrane to initiate budding. Post-translationally, phosphorylated at serine residues in the N-terminus. This phosphorylation regulates the localization within the inner nuclear membrane.

The protein resides in the host nucleus inner membrane. In terms of biological role, plays an essential role in virion nuclear egress, the first step of virion release from infected cell. Within the host nucleus, NEC1 interacts with the newly formed capsid through the vertexes and directs it to the inner nuclear membrane by associating with NEC2. Induces the budding of the capsid at the inner nuclear membrane as well as its envelopment into the perinuclear space. There, the NEC1/NEC2 complex promotes the fusion of the enveloped capsid with the outer nuclear membrane and the subsequent release of the viral capsid into the cytoplasm where it will reach the secondary budding sites in the host Golgi or trans-Golgi network. This chain is Nuclear egress protein 1, found in Human herpesvirus 2 (strain HG52) (HHV-2).